The sequence spans 199 residues: Recombination protein RecR (199 aa).

A C4-type zinc finger spans residues 58–73 (CVRCGNITNADLCGIC). The Toprim domain occupies 81 to 176 (GELCVVEDVA…QVTSLAQGVP (96 aa)).

This sequence belongs to the RecR family.

Functionally, may play a role in DNA repair. It seems to be involved in an RecBC-independent recombinational process of DNA repair. It may act with RecF and RecO. The sequence is that of Recombination protein RecR from Cereibacter sphaeroides (strain ATCC 17029 / ATH 2.4.9) (Rhodobacter sphaeroides).